Consider the following 128-residue polypeptide: Leucine-rich single-pass membrane protein 1 (128 aa).

Position 24 is a phosphoserine (Ser-24). A helical transmembrane segment spans residues 65–85 (VGLIIVLIISLALVSFVIFLI). Positions 87–111 (QTENKMEDVSRRLAAEGKDIDDLKK) form a coiled coil.

Its subcellular location is the membrane. The sequence is that of Leucine-rich single-pass membrane protein 1 (LSMEM1) from Bos taurus (Bovine).